The primary structure comprises 340 residues: Probable dual-specificity RNA methyltransferase RlmN (340 aa).

Catalysis depends on Glu90, which acts as the Proton acceptor. Positions 97-325 (QVSRKTACLS…PVTRRYQRGN (229 aa)) constitute a Radical SAM core domain. Cys104 and Cys331 are joined by a disulfide. [4Fe-4S] cluster is bound by residues Cys111, Cys115, and Cys118. S-adenosyl-L-methionine contacts are provided by residues 157–158 (GE), Ser189, 212–214 (SLT), and Asn288. Residue Cys331 is the S-methylcysteine intermediate of the active site.

The protein belongs to the radical SAM superfamily. RlmN family. The cofactor is [4Fe-4S] cluster.

Its subcellular location is the cytoplasm. The enzyme catalyses adenosine(2503) in 23S rRNA + 2 reduced [2Fe-2S]-[ferredoxin] + 2 S-adenosyl-L-methionine = 2-methyladenosine(2503) in 23S rRNA + 5'-deoxyadenosine + L-methionine + 2 oxidized [2Fe-2S]-[ferredoxin] + S-adenosyl-L-homocysteine. The catalysed reaction is adenosine(37) in tRNA + 2 reduced [2Fe-2S]-[ferredoxin] + 2 S-adenosyl-L-methionine = 2-methyladenosine(37) in tRNA + 5'-deoxyadenosine + L-methionine + 2 oxidized [2Fe-2S]-[ferredoxin] + S-adenosyl-L-homocysteine. In terms of biological role, specifically methylates position 2 of adenine 2503 in 23S rRNA and position 2 of adenine 37 in tRNAs. The protein is Probable dual-specificity RNA methyltransferase RlmN of Treponema pallidum (strain Nichols).